A 96-amino-acid polypeptide reads, in one-letter code: Conantokin Rl-B (96 aa).

Residues 1–21 form the signal peptide; that stretch reads MQLYTYLYLLVPLVTFHLILG. A propeptide spanning residues 22-78 is cleaved from the precursor; sequence TGTLDHGDALTERRSTDATALKPEPVLLQKSSARSTNDNGKDTQMKRILKKRGNKAR. Positions 51-96 are disordered; sequence KSSARSTNDNGKDTQMKRILKKRGNKARGEEELAEKAPEFARELAN. Basic and acidic residues predominate over residues 77 to 96; it reads ARGEEELAEKAPEFARELAN. Residue Glu-81 coordinates a divalent metal cation. 4-carboxyglutamate is present on residues Glu-81, Glu-82, and Glu-85. Glu-85 contacts a divalent metal cation. Pro-88 bears the 4-hydroxyproline mark. A divalent metal cation contacts are provided by Glu-89 and Glu-93. Glu-89 and Glu-93 each carry 4-carboxyglutamate. Asn-96 carries the asparagine amide modification.

Belongs to the conotoxin B superfamily. Ca(2+) is required as a cofactor. It depends on Mg(2+) as a cofactor. Hydroxylation of Pro-88 is important for NR2B/GRIN2B NMDA receptor selectivity. Removal of hydroxylation does not change global NMDA receptor antagonism (tested on WT neurons), but it decreases the inhibitory potency on NR2B/GRIN2B NMDA receptors and increases the inhibitory potency on NR2A/GRIN2A NMDA receptors. Hydroxylation of Pro-88 locally disrupts a small region of the divalent cation-induced alpha-helix but does not destabilize the entire helix. As to expression, expressed by the venom duct.

It localises to the secreted. Functionally, conantokins inhibit N-methyl-D-aspartate (NMDA) receptors. This toxin has antagonist activity on the NR2B/GRIN2B subunit (IC(50)=0.1 uM). In vivo, when delivered into the brain, is active has anticonvulsant activity in the model of epilepsy in mice. The sequence is that of Conantokin Rl-B from Conus rolani (Cone snail).